Consider the following 216-residue polypeptide: Ribose-5-phosphate isomerase A (216 aa).

Residues 26-29, 79-82, and 92-95 contribute to the substrate site; these read TGST, DGAD, and KGGG. E101 functions as the Proton acceptor in the catalytic mechanism. K119 contacts substrate.

It belongs to the ribose 5-phosphate isomerase family. As to quaternary structure, homodimer.

It catalyses the reaction aldehydo-D-ribose 5-phosphate = D-ribulose 5-phosphate. The protein operates within carbohydrate degradation; pentose phosphate pathway; D-ribose 5-phosphate from D-ribulose 5-phosphate (non-oxidative stage): step 1/1. In terms of biological role, catalyzes the reversible conversion of ribose-5-phosphate to ribulose 5-phosphate. The protein is Ribose-5-phosphate isomerase A of Legionella pneumophila (strain Paris).